The sequence spans 233 residues: Large ribosomal subunit protein uL1 (233 aa).

The protein belongs to the universal ribosomal protein uL1 family. As to quaternary structure, part of the 50S ribosomal subunit.

In terms of biological role, binds directly to 23S rRNA. The L1 stalk is quite mobile in the ribosome, and is involved in E site tRNA release. Protein L1 is also a translational repressor protein, it controls the translation of the L11 operon by binding to its mRNA. The protein is Large ribosomal subunit protein uL1 of Photorhabdus laumondii subsp. laumondii (strain DSM 15139 / CIP 105565 / TT01) (Photorhabdus luminescens subsp. laumondii).